A 210-amino-acid polypeptide reads, in one-letter code: Flagellar transcriptional regulator FlhC (210 aa).

Zn(2+) contacts are provided by C144, C147, C164, and C167.

Belongs to the FlhC family. In terms of assembly, heterohexamer composed of two FlhC and four FlhD subunits. Each FlhC binds a FlhD dimer, forming a heterotrimer, and a hexamer assembles by dimerization of two heterotrimers. Zn(2+) is required as a cofactor.

The protein resides in the cytoplasm. Functions in complex with FlhD as a master transcriptional regulator that regulates transcription of several flagellar and non-flagellar operons by binding to their promoter region. Activates expression of class 2 flagellar genes, including fliA, which is a flagellum-specific sigma factor that turns on the class 3 genes. Also regulates genes whose products function in a variety of physiological pathways. The chain is Flagellar transcriptional regulator FlhC from Cupriavidus pinatubonensis (strain JMP 134 / LMG 1197) (Cupriavidus necator (strain JMP 134)).